Consider the following 163-residue polypeptide: Flagellar assembly factor FliW (163 aa).

The segment covering 136-156 has biased composition (basic and acidic residues); the sequence is PFFETSEKKQSGLQRLERQPE. The disordered stretch occupies residues 136-163; the sequence is PFFETSEKKQSGLQRLERQPEKSVPPAG.

Belongs to the FliW family. As to quaternary structure, interacts with translational regulator CsrA and flagellin(s).

It is found in the cytoplasm. Functionally, acts as an anti-CsrA protein, binds CsrA and prevents it from repressing translation of its target genes, one of which is flagellin. Binds to flagellin and participates in the assembly of the flagellum. This chain is Flagellar assembly factor FliW, found in Geotalea uraniireducens (strain Rf4) (Geobacter uraniireducens).